Consider the following 59-residue polypeptide: MAVQQNKKSPSKRGMHRAHDFLTTPPLAVESTTGEAHLRHHISPAGFYRGKKVTKGKGE.

The segment at 1–59 is disordered; it reads MAVQQNKKSPSKRGMHRAHDFLTTPPLAVESTTGEAHLRHHISPAGFYRGKKVTKGKGE. The segment covering 49–59 has biased composition (basic residues); that stretch reads RGKKVTKGKGE.

Belongs to the bacterial ribosomal protein bL32 family.

The sequence is that of Large ribosomal subunit protein bL32 from Dechloromonas aromatica (strain RCB).